A 331-amino-acid polypeptide reads, in one-letter code: Glyceraldehyde-3-phosphate dehydrogenase (331 aa).

NAD(+) is bound by residues 10-11 (RI), aspartate 31, lysine 75, and threonine 117. D-glyceraldehyde 3-phosphate-binding positions include 148–150 (SCT) and threonine 179. Cysteine 149 functions as the Nucleophile in the catalytic mechanism. Position 180 (asparagine 180) interacts with NAD(+). D-glyceraldehyde 3-phosphate contacts are provided by residues arginine 194, 207-208 (TG), and arginine 230. Asparagine 311 serves as a coordination point for NAD(+).

The protein belongs to the glyceraldehyde-3-phosphate dehydrogenase family. Homotetramer.

The protein resides in the cytoplasm. It catalyses the reaction D-glyceraldehyde 3-phosphate + phosphate + NAD(+) = (2R)-3-phospho-glyceroyl phosphate + NADH + H(+). It functions in the pathway carbohydrate degradation; glycolysis; pyruvate from D-glyceraldehyde 3-phosphate: step 1/5. In terms of biological role, catalyzes the oxidative phosphorylation of glyceraldehyde 3-phosphate (G3P) to 1,3-bisphosphoglycerate (BPG) using the cofactor NAD. The first reaction step involves the formation of a hemiacetal intermediate between G3P and a cysteine residue, and this hemiacetal intermediate is then oxidized to a thioester, with concomitant reduction of NAD to NADH. The reduced NADH is then exchanged with the second NAD, and the thioester is attacked by a nucleophilic inorganic phosphate to produce BPG. This chain is Glyceraldehyde-3-phosphate dehydrogenase (gap), found in Thermus aquaticus.